We begin with the raw amino-acid sequence, 67 residues long: uncharacterized protein (67 aa).

This is an uncharacterized protein from Lymantria dispar multicapsid nuclear polyhedrosis virus (LdMNPV).